A 450-amino-acid polypeptide reads, in one-letter code: 3-phosphoshikimate 1-carboxyvinyltransferase (450 aa).

The 3-phosphoshikimate site is built by K28, S29, and R33. K28 is a phosphoenolpyruvate binding site. 2 residues coordinate phosphoenolpyruvate: G100 and R128. 3-phosphoshikimate is bound by residues S173, Q175, D326, and K353. Q175 lines the phosphoenolpyruvate pocket. The active-site Proton acceptor is D326. Residues R357 and R402 each contribute to the phosphoenolpyruvate site.

It belongs to the EPSP synthase family. Monomer.

The protein resides in the cytoplasm. The catalysed reaction is 3-phosphoshikimate + phosphoenolpyruvate = 5-O-(1-carboxyvinyl)-3-phosphoshikimate + phosphate. It functions in the pathway metabolic intermediate biosynthesis; chorismate biosynthesis; chorismate from D-erythrose 4-phosphate and phosphoenolpyruvate: step 6/7. Catalyzes the transfer of the enolpyruvyl moiety of phosphoenolpyruvate (PEP) to the 5-hydroxyl of shikimate-3-phosphate (S3P) to produce enolpyruvyl shikimate-3-phosphate and inorganic phosphate. This is 3-phosphoshikimate 1-carboxyvinyltransferase from Brucella abortus biovar 1 (strain 9-941).